A 462-amino-acid polypeptide reads, in one-letter code: Myb-like transcriptional regulator mfmK (462 aa).

3 HTH myb-type domains span residues 1–54 (MARL…WWNS), 56–110 (ADGT…DPGI), and 113–162 (CDWT…LKHE). DNA-binding regions (H-T-H motif) lie at residues 32 to 52 (WRDLAKSVPGRSNKDCRRRWW), 83 to 106 (WSRVSRAIRSRNPDQCSSHWSQVL), and 134 to 158 (WATIAASHVPPRTRLALKNRYSTLR). Over residues 159 to 175 (LKHENESKRESTIRKSV) the composition is skewed to basic and acidic residues. Disordered stretches follow at residues 159–184 (LKHENESKRESTIRKSVETPPSNFEP), 216–262 (DEEE…VDNG), and 374–408 (STTTGMDSSSAPGSRDTPPSMHFGTSASTTPRTSI). Residues 216 to 235 (DEEEDDDDDDEDNEEDDGDD) show a composition bias toward acidic residues. 2 stretches are compositionally biased toward polar residues: residues 374–385 (STTTGMDSSSAP) and 396–408 (FGTSASTTPRTSI).

The protein resides in the nucleus. Functionally, myb-like transcriptional regulator; part of the gene cluster that mediates the biosynthesis of the phthalide-terpenoid hybrid 11'-O-desmethylfendlerol. The polypeptide is Myb-like transcriptional regulator mfmK (Annulohypoxylon moriforme (Filamentous fungus)).